The primary structure comprises 291 residues: Elongation factor Ts (291 aa).

An involved in Mg(2+) ion dislocation from EF-Tu region spans residues 79-82 (TDFV).

It belongs to the EF-Ts family.

The protein resides in the cytoplasm. In terms of biological role, associates with the EF-Tu.GDP complex and induces the exchange of GDP to GTP. It remains bound to the aminoacyl-tRNA.EF-Tu.GTP complex up to the GTP hydrolysis stage on the ribosome. The polypeptide is Elongation factor Ts (Roseobacter denitrificans (strain ATCC 33942 / OCh 114) (Erythrobacter sp. (strain OCh 114))).